An 83-amino-acid chain; its full sequence is uncharacterized protein (83 aa).

The interval 57–83 (ESVEEEEEFEDYDEFEEEEEYYYDDEY) is disordered.

This is an uncharacterized protein from Archaeoglobus fulgidus (strain ATCC 49558 / DSM 4304 / JCM 9628 / NBRC 100126 / VC-16).